Consider the following 289-residue polypeptide: Protease HtpX (289 aa).

The next 2 membrane-spanning stretches (helical) occupy residues 6 to 26 (ILFL…LNII) and 38 to 58 (TGIL…SLFM). A Zn(2+)-binding site is contributed by His-144. Glu-145 is an active-site residue. A Zn(2+)-binding site is contributed by His-148. Helical transmembrane passes span 152 to 172 (GDMV…IFLS) and 194 to 214 (LVFW…ATMI). Residue Glu-223 participates in Zn(2+) binding.

It belongs to the peptidase M48B family. Zn(2+) is required as a cofactor.

Its subcellular location is the cell inner membrane. The protein is Protease HtpX of Haemophilus ducreyi (strain 35000HP / ATCC 700724).